The sequence spans 418 residues: MAEGLTREVRMEVPDTAELLRRSEDISGAPEGERLILNMGPSHPSTHGVFQLLLELDGEVITKAIPEVGYLHRGDEKIAENMQYNQFVPYTDRLDYLAPLANNVVYACAVEKLLGWEIPARAQVIRVICSEMARISSHLMGLGAYAMDCGAVSVFLYTFTEREKIYLLIEELTGARFTTSYTRIGGLTRDLPPGWTEKLKDFIKQFLPKVDEIEGLLTKNKIFVDRTQDIGIISKEDAIDYGLTGPNLRGSGVDHDLRKKNPYLGYEKYDFEVPLGSVGDCFDRYMVRIEEMRQSCRILDQALADIPPGPIAVDEPRGYLPKKSAVLTKMEELIQHFIVVTQGVDVPPGEVYFGGENPKGELGFYIVSKGGGVPYRLKIRSPSFVNLSILPKILPGHLLSDVVAILGSLDFVMGECDR.

The protein belongs to the complex I 49 kDa subunit family. In terms of assembly, NDH-1 is composed of 14 different subunits. Subunits NuoB, C, D, E, F, and G constitute the peripheral sector of the complex.

It is found in the cell inner membrane. It catalyses the reaction a quinone + NADH + 5 H(+)(in) = a quinol + NAD(+) + 4 H(+)(out). NDH-1 shuttles electrons from NADH, via FMN and iron-sulfur (Fe-S) centers, to quinones in the respiratory chain. The immediate electron acceptor for the enzyme in this species is believed to be ubiquinone. Couples the redox reaction to proton translocation (for every two electrons transferred, four hydrogen ions are translocated across the cytoplasmic membrane), and thus conserves the redox energy in a proton gradient. This is NADH-quinone oxidoreductase subunit D from Methylacidiphilum infernorum (isolate V4) (Methylokorus infernorum (strain V4)).